The sequence spans 270 residues: D-aminoacyl-tRNA deacylase (270 aa).

The protein belongs to the DtdA deacylase family. As to quaternary structure, monomer. It depends on Zn(2+) as a cofactor.

The enzyme catalyses a D-aminoacyl-tRNA + H2O = a tRNA + a D-alpha-amino acid + H(+). The catalysed reaction is glycyl-tRNA(Ala) + H2O = tRNA(Ala) + glycine + H(+). In terms of biological role, D-aminoacyl-tRNA deacylase with broad substrate specificity. By recycling D-aminoacyl-tRNA to D-amino acids and free tRNA molecules, this enzyme counteracts the toxicity associated with the formation of D-aminoacyl-tRNA entities in vivo. The chain is D-aminoacyl-tRNA deacylase from Pyrococcus furiosus (strain ATCC 43587 / DSM 3638 / JCM 8422 / Vc1).